Consider the following 98-residue polypeptide: N(2)-fixation sustaining protein CowN (98 aa).

Belongs to the CowN family.

Is required to sustain N(2)-dependent growth in the presence of low levels of carbon monoxide (CO). Probably acts by protecting the N(2) fixation ability of the nitrogenase complex, which is inactivated in the presence of CO. This Paramagnetospirillum magneticum (strain ATCC 700264 / AMB-1) (Magnetospirillum magneticum) protein is N(2)-fixation sustaining protein CowN.